A 345-amino-acid polypeptide reads, in one-letter code: Protein-glutamate methylesterase/protein-glutamine glutaminase 2 (345 aa).

The Response regulatory domain maps to lysine 7–leucine 124. Aspartate 58 carries the 4-aspartylphosphate modification. Residues serine 154–serine 345 form the CheB-type methylesterase domain. Catalysis depends on residues serine 166, histidine 192, and aspartate 289.

This sequence belongs to the CheB family. In terms of processing, phosphorylated by CheA. Phosphorylation of the N-terminal regulatory domain activates the methylesterase activity.

It localises to the cytoplasm. The enzyme catalyses [protein]-L-glutamate 5-O-methyl ester + H2O = L-glutamyl-[protein] + methanol + H(+). The catalysed reaction is L-glutaminyl-[protein] + H2O = L-glutamyl-[protein] + NH4(+). In terms of biological role, involved in chemotaxis. Part of a chemotaxis signal transduction system that modulates chemotaxis in response to various stimuli. Catalyzes the demethylation of specific methylglutamate residues introduced into the chemoreceptors (methyl-accepting chemotaxis proteins or MCP) by CheR. Also mediates the irreversible deamidation of specific glutamine residues to glutamic acid. This Vibrio vulnificus (strain YJ016) protein is Protein-glutamate methylesterase/protein-glutamine glutaminase 2.